The chain runs to 561 residues: Dihydroxy-acid dehydratase (561 aa).

Position 50 (Cys-50) interacts with [2Fe-2S] cluster. Asp-82 is a Mg(2+) binding site. Cys-123 contributes to the [2Fe-2S] cluster binding site. 2 residues coordinate Mg(2+): Asp-124 and Lys-125. The residue at position 125 (Lys-125) is an N6-carboxylysine. Cys-195 lines the [2Fe-2S] cluster pocket. Glu-447 contributes to the Mg(2+) binding site. The active-site Proton acceptor is Ser-473.

This sequence belongs to the IlvD/Edd family. Homodimer. It depends on [2Fe-2S] cluster as a cofactor. Mg(2+) serves as cofactor.

It carries out the reaction (2R)-2,3-dihydroxy-3-methylbutanoate = 3-methyl-2-oxobutanoate + H2O. The catalysed reaction is (2R,3R)-2,3-dihydroxy-3-methylpentanoate = (S)-3-methyl-2-oxopentanoate + H2O. It functions in the pathway amino-acid biosynthesis; L-isoleucine biosynthesis; L-isoleucine from 2-oxobutanoate: step 3/4. It participates in amino-acid biosynthesis; L-valine biosynthesis; L-valine from pyruvate: step 3/4. Functionally, functions in the biosynthesis of branched-chain amino acids. Catalyzes the dehydration of (2R,3R)-2,3-dihydroxy-3-methylpentanoate (2,3-dihydroxy-3-methylvalerate) into 2-oxo-3-methylpentanoate (2-oxo-3-methylvalerate) and of (2R)-2,3-dihydroxy-3-methylbutanoate (2,3-dihydroxyisovalerate) into 2-oxo-3-methylbutanoate (2-oxoisovalerate), the penultimate precursor to L-isoleucine and L-valine, respectively. This chain is Dihydroxy-acid dehydratase, found in Trichodesmium erythraeum (strain IMS101).